Here is a 426-residue protein sequence, read N- to C-terminus: UPF0597 protein CLB_1750 (426 aa).

It belongs to the UPF0597 family.

The polypeptide is UPF0597 protein CLB_1750 (Clostridium botulinum (strain ATCC 19397 / Type A)).